Here is a 136-residue protein sequence, read N- to C-terminus: Histone H3.2 (136 aa).

The disordered stretch occupies residues 1–43; it reads MARTKQTARKSTGGKAPRKQLATKAARKSAPATGGVKKPHRFR. The residue at position 5 (lysine 5) is an N6-methylated lysine. Lysine 10 bears the N6-acetyllysine; alternate mark. Lysine 10 is subject to N6-methylated lysine; alternate. Phosphoserine is present on serine 11. Residue threonine 12 is modified to Phosphothreonine. Lysine 15 is modified (N6-acetyllysine). An N6-acetyllysine; alternate mark is found at lysine 19 and lysine 24. 2 positions are modified to N6-methylated lysine; alternate: lysine 19 and lysine 24. At lysine 28 the chain carries N6-methylated lysine. Serine 29 carries the post-translational modification Phosphoserine. Lysine 37 carries the N6-methylated lysine modification.

Belongs to the histone H3 family. In terms of assembly, the nucleosome is a histone octamer containing two molecules each of H2A, H2B, H3 and H4 assembled in one H3-H4 heterotetramer and two H2A-H2B heterodimers. The octamer wraps approximately 147 bp of DNA. Acetylation is generally linked to gene activation. Can be acetylated to form H3K9ac, H3K14ac, H3K18ac and H3K23ac. H3K9ac could compete with H3K9me and prevent gene silencing. H3K9ac is restricted to euchromatin. In terms of processing, methylated to form mainly H3K4me, H3K9me, H3K18me, H3K23me, H3K27me and H3K36me. H3K4me1/2/3, H3K9me3, H3K27me3 and H3K36me1/2/3 are typical marks for euchromatin, whereas heterochromatic chromocenters are enriched in H3K9me1/2 and H3K27me1/2. H2BK143ub1 is probably prerequisite for H3K4me. Post-translationally, can be phosphorylated to form H3S10ph, H3T11ph and H3S28ph. In terms of tissue distribution, expressed in bicellular pollen, root tips, shoot apices, young leaves and ovules.

The protein localises to the nucleus. It localises to the nucleolus. The protein resides in the chromosome. Its function is as follows. Core component of nucleosome. Nucleosomes wrap and compact DNA into chromatin, limiting DNA accessibility to the cellular machineries which require DNA as a template. Histones thereby play a central role in transcription regulation, DNA repair, DNA replication and chromosomal stability. DNA accessibility is regulated via a complex set of post-translational modifications of histones, also called histone code, and nucleosome remodeling. In Lilium longiflorum (Trumpet lily), this protein is Histone H3.2 (YAH3).